The primary structure comprises 1969 residues: Myosin-3 (1969 aa).

Residues 33–82 (DSKKNCWIPDPEDGFVAAEIQSTTGEQVTVVTVKGNQITVKKDQCQEMNP) form the Myosin N-terminal SH3-like domain. The 706-residue stretch at 86–791 (DKTEDMANLT…VLAKLEDLRD (706 aa)) folds into the Myosin motor domain. Lys130 is modified (N6,N6,N6-trimethyllysine). Position 179–186 (179–186 (GESGAGKT)) interacts with ATP. Actin-binding stretches follow at residues 667 to 689 (LNNL…IPNE) and 770 to 784 (KVGE…GVLA). Positions 794-823 (LSRIVTMFQSRIRSYLAKAEVRRRYEQQTG) constitute an IQ domain. Positions 857-1969 (KEQEAMGELA…IRSSSNARFL (1113 aa)) form a coiled coil. Disordered regions lie at residues 942–966 (MQER…TKKH), 1006–1029 (NKEK…EEDK), 1131–1213 (LEEE…GDSV), and 1234–1255 (KSKL…VRSR). Basic and acidic residues-rich tracts occupy residues 1137 to 1164 (AERN…ERLE) and 1176 to 1197 (ANKK…DSLN).

The protein belongs to the TRAFAC class myosin-kinesin ATPase superfamily. Myosin family. As to quaternary structure, muscle myosin is a hexameric protein that consists of 2 heavy chain subunits (MHC), 2 alkali light chain subunits (MLC) and 2 regulatory light chain subunits (MLC-2). Expressed in body wall muscles, neighboring vulval muscle cells and the contractile sheath covering the hermaphrodite gonad (myoepithelial sheath cells).

The protein localises to the cytoplasm. It localises to the myofibril. Its subcellular location is the sarcomere. The protein resides in the a band. Its function is as follows. Essential for muscle contraction. Involved in ovulation likely by regulating the contraction of gonadal myoepithelial sheath cells. In Caenorhabditis elegans, this protein is Myosin-3 (myo-3).